The primary structure comprises 267 residues: Pyridoxine/pyridoxamine 5'-phosphate oxidase (267 aa).

Residues Arg-20–Tyr-23 and Lys-80 each bind substrate. FMN-binding positions include Arg-75–Lys-80, Tyr-90–Thr-91, Arg-96, Lys-97, and Gln-119. Substrate-binding residues include Tyr-137, Arg-141, and Ser-145. Residues Gln-154–Ser-155 and Trp-200 each bind FMN. Arg-206 to His-208 contributes to the substrate binding site. Arg-210 is an FMN binding site.

It belongs to the pyridoxamine 5'-phosphate oxidase family. As to quaternary structure, homodimer. The cofactor is FMN.

It carries out the reaction pyridoxamine 5'-phosphate + O2 + H2O = pyridoxal 5'-phosphate + H2O2 + NH4(+). It catalyses the reaction pyridoxine 5'-phosphate + O2 = pyridoxal 5'-phosphate + H2O2. It functions in the pathway cofactor metabolism; pyridoxal 5'-phosphate salvage; pyridoxal 5'-phosphate from pyridoxamine 5'-phosphate: step 1/1. The protein operates within cofactor metabolism; pyridoxal 5'-phosphate salvage; pyridoxal 5'-phosphate from pyridoxine 5'-phosphate: step 1/1. Its function is as follows. Catalyzes the oxidation of either pyridoxine 5'-phosphate (PNP) or pyridoxamine 5'-phosphate (PMP) into pyridoxal 5'-phosphate (PLP). This is Pyridoxine/pyridoxamine 5'-phosphate oxidase from Frankia casuarinae (strain DSM 45818 / CECT 9043 / HFP020203 / CcI3).